A 201-amino-acid chain; its full sequence is FMN-dependent NADH:quinone oxidoreductase (201 aa).

Residues serine 10, 16–18, 96–99, and 140–143 each bind FMN; these read SQS, MYNF, and SRGG.

This sequence belongs to the azoreductase type 1 family. In terms of assembly, homodimer. It depends on FMN as a cofactor.

It catalyses the reaction 2 a quinone + NADH + H(+) = 2 a 1,4-benzosemiquinone + NAD(+). The catalysed reaction is N,N-dimethyl-1,4-phenylenediamine + anthranilate + 2 NAD(+) = 2-(4-dimethylaminophenyl)diazenylbenzoate + 2 NADH + 2 H(+). Functionally, quinone reductase that provides resistance to thiol-specific stress caused by electrophilic quinones. Also exhibits azoreductase activity. Catalyzes the reductive cleavage of the azo bond in aromatic azo compounds to the corresponding amines. This chain is FMN-dependent NADH:quinone oxidoreductase, found in Salmonella paratyphi A (strain ATCC 9150 / SARB42).